The chain runs to 176 residues: Membrane glycoprotein UL144 (176 aa).

A signal peptide spans 1–20; it reads MKPLVMLICFGVILLQLGVT. A TNFR-Cys repeat occupies 58 to 95; that stretch reads PCPNGTYVSGLYNCTDCTQCNVTQVMIRNCTSTNNTVC. 3 disulfides stabilise this stretch: cysteine 59-cysteine 71, cysteine 74-cysteine 87, and cysteine 77-cysteine 95. Residues 134–154 form a helical membrane-spanning segment; that stretch reads LAWLSLFIFLVGIILLILYLI.

Interacts with host TRIM23; this interaction causes auto-ubiquitination of TRAF6, leading to NF-kappaB activation.

The protein resides in the membrane. Activates NF-kappa-B in a tumor necrosis factor receptor (TNFR)-associated factor 6 (TRAF6)-dependent manner, causing the up-regulation of the chemokine CCL22. In Human cytomegalovirus (strain Merlin) (HHV-5), this protein is Membrane glycoprotein UL144 (UL144).